We begin with the raw amino-acid sequence, 317 residues long: Zinc metalloproteinase/disintegrin (317 aa).

The propeptide occupies 1–26; it reads EAPKMCGVTQNWESYEPIKKASQSNL. One can recognise a Peptidase M12B domain in the interval 32–228; it reads RYIELVIVAD…QKPQCILNKP (197 aa). Residues Glu35 and Asp119 each coordinate Ca(2+). 3 disulfides stabilise this stretch: Cys143/Cys223, Cys183/Cys207, and Cys185/Cys190. His168 contributes to the Zn(2+) binding site. Residue Glu169 is part of the active site. Residues His172 and His178 each contribute to the Zn(2+) site. Positions 223 and 226 each coordinate Ca(2+). A propeptide spanning residues 229–244 is cleaved from the precursor; that stretch reads LRTDTVSTPVSGNELL. The region spanning 236–317 is the Disintegrin domain; the sequence is TPVSGNELLE…AGCPRNPFHA (82 aa). Cystine bridges form between Cys250-Cys259, Cys252-Cys260, Cys265-Cys279, Cys273-Cys303, Cys278-Cys282, and Cys291-Cys310. The Cell attachment site motif lies at 295-297; it reads RGD.

This sequence belongs to the venom metalloproteinase (M12B) family. P-II subfamily. P-IIa sub-subfamily. In terms of assembly, monomer. Zn(2+) is required as a cofactor. Expressed by the venom gland.

The protein localises to the secreted. Its function is as follows. metalloproteinase that impairs hemostasis in the envenomed animal. Inhibits GPIIb/GPIIIa (ITGA2B/ITGB3) binding to immobilized fibrinogen with an IC(50) of 2.2 nM and ADP-induced platelet aggregation with an IC(50) of 131 nM, respectively. Inhibits angiogenesis. By binding to vitronectin receptor (alpha-V/beta-3 (ITGAV/ITGB3)), also induces apoptosis of endothelial cells by blocking their attachment to extracellular matrix proteins. In terms of biological role, inhibits platelet aggregation induced by ADP (IC(50) is 30 nM), collagen (IC(50) is 500 nM), thrombin and epinephrin (IC(50) is 160 nM). The chain is Zinc metalloproteinase/disintegrin from Gloydius brevicauda (Korean slamosa snake).